Here is a 397-residue protein sequence, read N- to C-terminus: Phosphoglycerate transport regulatory protein PgtC (397 aa).

Residues 1–24 (MFGSCQAYSRELVMATTFSPSATA) form the signal peptide. The helical transmembrane segment at 102-117 (TSVAVAVSGFGLLINR) threads the bilayer.

Its subcellular location is the cell membrane. In terms of biological role, required for pgtP expression, it may act jointly with the PgtA/PgtB signaling proteins. In Salmonella typhi, this protein is Phosphoglycerate transport regulatory protein PgtC (pgtC).